The chain runs to 272 residues: Hydroxyethylthiazole kinase (272 aa).

M46 serves as a coordination point for substrate. The ATP site is built by R122 and T168. G195 is a binding site for substrate.

It belongs to the Thz kinase family. The cofactor is Mg(2+).

The enzyme catalyses 5-(2-hydroxyethyl)-4-methylthiazole + ATP = 4-methyl-5-(2-phosphooxyethyl)-thiazole + ADP + H(+). It participates in cofactor biosynthesis; thiamine diphosphate biosynthesis; 4-methyl-5-(2-phosphoethyl)-thiazole from 5-(2-hydroxyethyl)-4-methylthiazole: step 1/1. Functionally, catalyzes the phosphorylation of the hydroxyl group of 4-methyl-5-beta-hydroxyethylthiazole (THZ). The protein is Hydroxyethylthiazole kinase of Alkaliphilus metalliredigens (strain QYMF).